The following is a 172-amino-acid chain: Transmembrane protein 91 (172 aa).

Residues 1-97 (MDNSSIQELQ…SPLLPHDHLG (97 aa)) are Extracellular-facing. The interval 60-86 (GLGEPETPDFEDTLSSDSDSDDDGGDR) is disordered. Positions 65–83 (ETPDFEDTLSSDSDSDDDG) are enriched in acidic residues. A helical membrane pass occupies residues 98–118 (LAVFSVLCCFWPVGIAAFCLA). Residues 119-139 (HKTNKAWAKGDVQGAGAASRR) are Cytoplasmic-facing. The helical transmembrane segment at 140 to 160 (AFLLGVLAVGLGLCTYAAALV) threads the bilayer. Over 161–172 (TLAAYLASRDPP) the chain is Extracellular.

The protein belongs to the CD225/Dispanin family.

The protein localises to the membrane. The sequence is that of Transmembrane protein 91 (Tmem91) from Mus musculus (Mouse).